A 368-amino-acid polypeptide reads, in one-letter code: Cobalt-precorrin-5B C(1)-methyltransferase (368 aa).

It belongs to the CbiD family.

It carries out the reaction Co-precorrin-5B + S-adenosyl-L-methionine = Co-precorrin-6A + S-adenosyl-L-homocysteine. Its pathway is cofactor biosynthesis; adenosylcobalamin biosynthesis; cob(II)yrinate a,c-diamide from sirohydrochlorin (anaerobic route): step 6/10. Catalyzes the methylation of C-1 in cobalt-precorrin-5B to form cobalt-precorrin-6A. The sequence is that of Cobalt-precorrin-5B C(1)-methyltransferase from Synechococcus sp. (strain CC9605).